The primary structure comprises 336 residues: Iron(3+)-hydroxamate import system permease protein FhuG (336 aa).

9 consecutive transmembrane segments (helical) span residues 9–29 (LIVM…SLNL), 63–83 (IILS…LQSV), 91–111 (PGIL…IYFF), 124–144 (FMLP…IYIL), 155–175 (LILV…IFQL), 193–213 (IWGA…ILLL), 245–265 (ILLL…GGIA), 285–305 (TLIP…DTLA), and 313–333 (EIPV…YLLM).

Belongs to the binding-protein-dependent transport system permease family. FecCD subfamily. In terms of assembly, the complex is composed of an ATP-binding protein (FhuC), two transmembrane proteins (FhuB and FhuG) and a solute-binding protein (FhuD or YxeB).

It is found in the cell membrane. In terms of biological role, part of the ABC transporter complex FhuBGCD involved in iron(3+)-hydroxamate import. Responsible for the translocation of the substrate across the membrane. This chain is Iron(3+)-hydroxamate import system permease protein FhuG (fhuG), found in Bacillus subtilis (strain 168).